A 264-amino-acid polypeptide reads, in one-letter code: Thymidylate synthase (264 aa).

Residue arginine 21 participates in dUMP binding. Histidine 51 is a binding site for (6R)-5,10-methylene-5,6,7,8-tetrahydrofolate. 126 to 127 (RR) lines the dUMP pocket. The active-site Nucleophile is cysteine 146. Residues 166 to 169 (RSAD), asparagine 177, and 207 to 209 (HLY) each bind dUMP. Aspartate 169 is a binding site for (6R)-5,10-methylene-5,6,7,8-tetrahydrofolate. Alanine 263 is a (6R)-5,10-methylene-5,6,7,8-tetrahydrofolate binding site.

The protein belongs to the thymidylate synthase family. Bacterial-type ThyA subfamily. In terms of assembly, homodimer.

The protein resides in the cytoplasm. It catalyses the reaction dUMP + (6R)-5,10-methylene-5,6,7,8-tetrahydrofolate = 7,8-dihydrofolate + dTMP. It participates in pyrimidine metabolism; dTTP biosynthesis. In terms of biological role, catalyzes the reductive methylation of 2'-deoxyuridine-5'-monophosphate (dUMP) to 2'-deoxythymidine-5'-monophosphate (dTMP) while utilizing 5,10-methylenetetrahydrofolate (mTHF) as the methyl donor and reductant in the reaction, yielding dihydrofolate (DHF) as a by-product. This enzymatic reaction provides an intracellular de novo source of dTMP, an essential precursor for DNA biosynthesis. The protein is Thymidylate synthase of Azoarcus sp. (strain BH72).